A 1012-amino-acid polypeptide reads, in one-letter code: RAS protein activator like-3 (1012 aa).

Disordered regions lie at residues 1–128 (MDPP…TPDV), 147–196 (GNED…QIHN), and 208–229 (KKAKSELGASASRDGPPSALGS). Positions 7-21 (SRASQTQPVAPSPLT) are enriched in polar residues. At S18 the chain carries Phosphoserine. Over residues 27–39 (SGGGAEKGAGGFR) the composition is skewed to gly residues. Positions 50 to 62 (QSHQETTASSQPA) are enriched in polar residues. S51 carries the post-translational modification Phosphoserine. Residues 100 to 113 (SEPEPENPEPEPEL) show a composition bias toward acidic residues. Phosphoserine is present on residues S160, S162, S163, and S166. Residues 160 to 171 (SASSESSIHVAS) are compositionally biased toward low complexity. Basic and acidic residues predominate over residues 175-186 (KDPDRTPGKTDP). A PH domain is found at 193–294 (QIHNVRGLLK…WIEDLRRHFQ (102 aa)). Residues S212, S225, S229, and S232 each carry the phosphoserine modification. T235 bears the Phosphothreonine mark. Positions 285-405 (WIEDLRRHFQ…APAAGLERWF (121 aa)) constitute a C2 domain. One can recognise a Ras-GAP domain in the interval 475-683 (GRAQALVTDL…PAMQHFLDQV (209 aa)). Positions 752–887 (PAPRTQGHSS…DKDQALGTHR (136 aa)) are disordered. Phosphoserine occurs at positions 788 and 791. A compositionally biased stretch (basic residues) spans 826-841 (PARRRPSAGPRPRPKG). Residues 889-989 (VGKLAELQCE…KDTIQNLQLL (101 aa)) are a coiled coil. Over residues 990 to 999 (PRTSESQSQP) the composition is skewed to polar residues. The segment at 990 to 1012 (PRTSESQSQPVPLKAPCINGDTT) is disordered.

It localises to the cytoplasm. It is found in the cell cortex. Its function is as follows. Functions as a Ras GTPase-activating protein. Plays an important role in the expansion and functions of natural killer T (NKT) cells in the liver by negatively regulating RAS activity and the down-stream ERK signaling pathway. The sequence is that of RAS protein activator like-3 (RASAL3) from Bos taurus (Bovine).